The sequence spans 150 residues: 3-hydroxyacyl-[acyl-carrier-protein] dehydratase FabZ (150 aa).

Histidine 53 is an active-site residue.

Belongs to the thioester dehydratase family. FabZ subfamily.

The protein localises to the cytoplasm. The enzyme catalyses a (3R)-hydroxyacyl-[ACP] = a (2E)-enoyl-[ACP] + H2O. Its function is as follows. Involved in unsaturated fatty acids biosynthesis. Catalyzes the dehydration of short chain beta-hydroxyacyl-ACPs and long chain saturated and unsaturated beta-hydroxyacyl-ACPs. The chain is 3-hydroxyacyl-[acyl-carrier-protein] dehydratase FabZ from Photorhabdus laumondii subsp. laumondii (strain DSM 15139 / CIP 105565 / TT01) (Photorhabdus luminescens subsp. laumondii).